Here is a 605-residue protein sequence, read N- to C-terminus: Golgi-associated RAB2 interactor protein 3 (605 aa).

Disordered stretches follow at residues 234–265 and 407–529; these read GEGI…AART and YMSE…ALQK. A compositionally biased stretch (low complexity) spans 239 to 265; that stretch reads HASHGTASAASPSTSTPGAAEGGAART. Basic residues predominate over residues 434 to 457; the sequence is KKDRHPSRKSSHHRKAGESHRRRA. A Bipartite nuclear localization signal motif is present at residues 441–458; that stretch reads RKSSHHRKAGESHRRRAG. Residues 463–473 show a composition bias toward polar residues; the sequence is KASSHRSASGH. Residues 475–484 show a composition bias toward basic and acidic residues; that stretch reads NTRDDKKEKG. The span at 489–500 shows a compositional bias: basic residues; the sequence is RGKRHGSSRKSS. Positions 513–526 are enriched in polar residues; it reads QELGKNQSASSTGA. Position 592 is a phosphoserine (S592).

Belongs to the GARIN family. In terms of assembly, interacts (via N-terminus) with RAB2B (in GTP-bound form). Interacts with FRG1. As to expression, expressed in adult spermatocytes and spermatids (at protein level).

Its subcellular location is the golgi apparatus. The protein localises to the nucleus. It is found in the cajal body. Functionally, may be involved in RNA biogenesis. This chain is Golgi-associated RAB2 interactor protein 3, found in Homo sapiens (Human).